A 52-amino-acid polypeptide reads, in one-letter code: Insulin (52 aa).

3 cysteine pairs are disulfide-bonded: cysteine 7–cysteine 38, cysteine 19–cysteine 51, and cysteine 37–cysteine 42.

It belongs to the insulin family. In terms of assembly, heterodimer of a B chain and an A chain linked by two disulfide bonds.

Its subcellular location is the secreted. Functionally, insulin decreases blood glucose concentration. It increases cell permeability to monosaccharides, amino acids and fatty acids. It accelerates glycolysis, the pentose phosphate cycle, and glycogen synthesis in liver. The sequence is that of Insulin (ins) from Atractosteus spatula (Alligator gar).